A 337-amino-acid chain; its full sequence is Protein SphX (337 aa).

A signal peptide spans M1–A30.

The protein belongs to the PstS family. In terms of processing, the N-terminus is blocked.

It localises to the cell inner membrane. May be involved in the system for phosphate transport across the cytoplasmic membrane. This Synechococcus elongatus (strain ATCC 33912 / PCC 7942 / FACHB-805) (Anacystis nidulans R2) protein is Protein SphX (sphX).